A 431-amino-acid polypeptide reads, in one-letter code: Gamma-glutamyl phosphate reductase (431 aa).

This sequence belongs to the gamma-glutamyl phosphate reductase family.

It is found in the cytoplasm. The enzyme catalyses L-glutamate 5-semialdehyde + phosphate + NADP(+) = L-glutamyl 5-phosphate + NADPH + H(+). It functions in the pathway amino-acid biosynthesis; L-proline biosynthesis; L-glutamate 5-semialdehyde from L-glutamate: step 2/2. In terms of biological role, catalyzes the NADPH-dependent reduction of L-glutamate 5-phosphate into L-glutamate 5-semialdehyde and phosphate. The product spontaneously undergoes cyclization to form 1-pyrroline-5-carboxylate. This chain is Gamma-glutamyl phosphate reductase, found in Bifidobacterium longum subsp. infantis (strain ATCC 15697 / DSM 20088 / JCM 1222 / NCTC 11817 / S12).